The chain runs to 626 residues: Basic helix-loop-helix ARNT-like protein 1 (626 aa).

Positions 1 to 60 are disordered; that stretch reads MADQRMDISSTISDFMSPGATDLLSSPLGTSGMDCNRKRKGSSTDYQESMDTDKDDPHGR. Ser-17 bears the Phosphoserine; by GSK3-beta mark. Thr-21 is modified (phosphothreonine; by GSK3-beta). The Nuclear localization signal motif lies at 36–41; that stretch reads NRKRKG. Residues 51 to 60 are compositionally biased toward basic and acidic residues; that stretch reads DTDKDDPHGR. In terms of domain architecture, bHLH spans 72 to 125; that stretch reads NAREAHSQIEKRRRDKMNSFIDELASLVPTCNAMSRKLDKLTVLRMAVQHMKTL. Residue Ser-78 is modified to Phosphoserine. Ser-90 is modified (phosphoserine; by CK2). A Nuclear export signal 1 motif is present at residues 142–152; sequence LSDDELKHLIL. A PAS 1 domain is found at 143–215; sequence SDDELKHLIL…EQLSSSDTAP (73 aa). A Glycyl lysine isopeptide (Lys-Gly) (interchain with G-Cter in SUMO2 and SUMO3) cross-link involves residue Lys-252. Residue Lys-259 forms a Glycyl lysine isopeptide (Lys-Gly) (interchain with G-Cter in SUMO); alternate linkage. Residue Lys-259 forms a Glycyl lysine isopeptide (Lys-Gly) (interchain with G-Cter in SUMO2); alternate linkage. Residues 326–396 form the PAS 2 domain; that stretch reads PQPVNGEIRV…ECHRQVLQTR (71 aa). The Nuclear export signal 2 signature appears at 361 to 369; it reads LAYLPQELL. Positions 401 to 444 constitute a PAC domain; that stretch reads TNCYKFKIKDGSFITLRSRWFSFMNPWTKEVEYIVSTNTVVLAN. 2 disordered regions span residues 457–493 and 510–597; these read TASPHSMDSMLPSGEGGPKRTHPTVPGIPGGTRAGAG and RGSS…SNDE. Residues 484–493 are compositionally biased toward gly residues; it reads IPGGTRAGAG. Residues 508-588 form an interaction with CIART region; that stretch reads RIRGSSPSSC…IGIDMIDNDQ (81 aa). Low complexity predominate over residues 511–521; sequence GSSPSSCGSSP. The residue at position 538 (Lys-538) is an N6-acetyllysine.

As to quaternary structure, component of the circadian clock oscillator which includes the CRY1/2 proteins, CLOCK or NPAS2, BMAL1 or BMAL2, CSNK1D and/or CSNK1E, TIMELESS and the PER1/2/3 proteins. Forms a heterodimer with CLOCK. The CLOCK-BMAL1 heterodimer is required for E-box-dependent transactivation, for CLOCK nuclear translocation and degradation, and, for phosphorylation of both CLOCK and BMAL1. Part of a nuclear complex which also includes RACK1 and PRKCA; RACK1 and PRKCA are recruited to the complex in a circadian manner. Interacts with NPAS2. Interacts with EZH2. Interacts with SUMO3. Interacts with SIRT1. Interacts with AHR. Interacts with ID1, ID2 and ID3. Interacts with DDX4. Interacts with OGT. Interacts with EED and SUZ12. Interacts with MTA1. Interacts with CIART. Interacts with HSP90. Interacts with KAT2B and EP300. Interacts with BHLHE40/DEC1 and BHLHE41/DEC2. Interacts with RELB and the interaction is enhanced in the presence of CLOCK. Interacts with PER1, PER2, CRY1 and CRY2 and this interaction requires a translocation to the nucleus. Interaction of the CLOCK-BMAL1 heterodimer with PER or CRY inhibits transcription activation. Interaction of the CLOCK-BMAL1 with CRY1 is independent of DNA but with PER2 is off DNA. The CLOCK-BMAL1 heterodimer interacts with GSK3B. Interacts with KDM5A. Interacts with KMT2A; in a circadian manner. Interacts with UBE3A. Interacts with PRKCG. Interacts with MAGEL2. Interacts with NCOA2. Interacts with THRAP3. The CLOCK-BMAL1 heterodimer interacts with PASD1. Interacts with PASD1. Interacts with USP9X. Interacts with PIWIL2 (via PIWI domain). Interacts with HDAC3. Interacts with HNF4A. In terms of processing, ubiquitinated, leading to its proteasomal degradation. Deubiquitinated by USP9X. Post-translationally, O-glycosylated; contains O-GlcNAc. O-glycosylation by OGT prevents protein degradation by inhibiting ubiquitination. It also stabilizes the CLOCK-BMAL1 heterodimer thereby increasing CLOCK-BMAL1-mediated transcription of genes in the negative loop of the circadian clock such as PER1/2/3 and CRY1/2. Acetylated on Lys-538 by CLOCK during the repression phase of the circadian cycle. Acetylation facilitates recruitment of CRY1 protein and initiates the repression phase of the circadian cycle. Acetylated at Lys-538 by KAT5 during the activation phase of the cycle, leading to recruitment of the positive transcription elongation factor b (P-TEFb) and BRD4, followed by productive elongation of circadian transcripts. Deacetylated by SIRT1, which may result in decreased protein stability. In terms of processing, phosphorylated upon dimerization with CLOCK. Phosphorylation enhances the transcriptional activity, alters the subcellular localization and decreases the stability of the CLOCK-BMAL1 heterodimer by promoting its degradation. Phosphorylation shows circadian variations in the liver with a peak between CT10 to CT14. Phosphorylation at Ser-90 by CK2 is essential for its nuclear localization, its interaction with CLOCK and controls CLOCK nuclear entry. Dephosphorylation at Ser-78 is important for dimerization with CLOCK and transcriptional activity. Post-translationally, sumoylated on Lys-259 upon dimerization with CLOCK. Predominantly conjugated to poly-SUMO2/3 rather than SUMO1 and the level of these conjugates undergo rhythmic variation, peaking at CT9-CT12. Sumoylation localizes it exclusively to the PML body and promotes its ubiquitination in the PML body, ubiquitin-dependent proteasomal degradation and the transcriptional activity of the CLOCK-BMAL1 heterodimer. Undergoes lysosome-mediated degradation in a time-dependent manner in the liver.

The protein resides in the nucleus. The protein localises to the cytoplasm. Its subcellular location is the PML body. Its function is as follows. Transcriptional activator which forms a core component of the circadian clock. The circadian clock, an internal time-keeping system, regulates various physiological processes through the generation of approximately 24 hour circadian rhythms in gene expression, which are translated into rhythms in metabolism and behavior. It is derived from the Latin roots 'circa' (about) and 'diem' (day) and acts as an important regulator of a wide array of physiological functions including metabolism, sleep, body temperature, blood pressure, endocrine, immune, cardiovascular, and renal function. Consists of two major components: the central clock, residing in the suprachiasmatic nucleus (SCN) of the brain, and the peripheral clocks that are present in nearly every tissue and organ system. Both the central and peripheral clocks can be reset by environmental cues, also known as Zeitgebers (German for 'timegivers'). The predominant Zeitgeber for the central clock is light, which is sensed by retina and signals directly to the SCN. The central clock entrains the peripheral clocks through neuronal and hormonal signals, body temperature and feeding-related cues, aligning all clocks with the external light/dark cycle. Circadian rhythms allow an organism to achieve temporal homeostasis with its environment at the molecular level by regulating gene expression to create a peak of protein expression once every 24 hours to control when a particular physiological process is most active with respect to the solar day. Transcription and translation of core clock components (CLOCK, NPAS2, BMAL1, BMAL2, PER1, PER2, PER3, CRY1 and CRY2) plays a critical role in rhythm generation, whereas delays imposed by post-translational modifications (PTMs) are important for determining the period (tau) of the rhythms (tau refers to the period of a rhythm and is the length, in time, of one complete cycle). A diurnal rhythm is synchronized with the day/night cycle, while the ultradian and infradian rhythms have a period shorter and longer than 24 hours, respectively. Disruptions in the circadian rhythms contribute to the pathology of cardiovascular diseases, cancer, metabolic syndromes and aging. A transcription/translation feedback loop (TTFL) forms the core of the molecular circadian clock mechanism. Transcription factors, CLOCK or NPAS2 and BMAL1 or BMAL2, form the positive limb of the feedback loop, act in the form of a heterodimer and activate the transcription of core clock genes and clock-controlled genes (involved in key metabolic processes), harboring E-box elements (5'-CACGTG-3') within their promoters. The core clock genes: PER1/2/3 and CRY1/2 which are transcriptional repressors form the negative limb of the feedback loop and interact with the CLOCK|NPAS2-BMAL1|BMAL2 heterodimer inhibiting its activity and thereby negatively regulating their own expression. This heterodimer also activates nuclear receptors NR1D1, NR1D2, RORA, RORB and RORG, which form a second feedback loop and which activate and repress BMAL1 transcription, respectively. BMAL1 positively regulates myogenesis and negatively regulates adipogenesis via the transcriptional control of the genes of the canonical Wnt signaling pathway. Plays a role in normal pancreatic beta-cell function; regulates glucose-stimulated insulin secretion via the regulation of antioxidant genes NFE2L2/NRF2 and its targets SESN2, PRDX3, CCLC and CCLM. Negatively regulates the mTORC1 signaling pathway; regulates the expression of MTOR and DEPTOR. Controls diurnal oscillations of Ly6C inflammatory monocytes; rhythmic recruitment of the PRC2 complex imparts diurnal variation to chemokine expression that is necessary to sustain Ly6C monocyte rhythms. Regulates the expression of HSD3B2, STAR, PTGS2, CYP11A1, CYP19A1 and LHCGR in the ovary and also the genes involved in hair growth. Plays an important role in adult hippocampal neurogenesis by regulating the timely entry of neural stem/progenitor cells (NSPCs) into the cell cycle and the number of cell divisions that take place prior to cell-cycle exit. Regulates the circadian expression of CIART. The CLOCK-BMAL1 heterodimer regulates the circadian expression of SERPINE1/PAI1, VWF, B3, CCRN4L/NOC, NAMPT, DBP, MYOD1, PPARGC1A, PPARGC1B, SIRT1, GYS2, F7, NGFR, GNRHR, BHLHE40/DEC1, ATF4, MTA1 and also genes implicated in glucose and lipid metabolism. Promotes rhythmic chromatin opening, regulating the DNA accessibility of other transcription factors. The NPAS2-BMAL1 heterodimer positively regulates the expression of MAOA, F7 and LDHA and modulates the circadian rhythm of daytime contrast sensitivity by regulating the rhythmic expression of adenylate cyclase type 1 (ADCY1) in the retina. The preferred binding motif for the CLOCK-BMAL1 heterodimer is 5'-CACGTGA-3', which contains a flanking adenine nucleotide at the 3-prime end of the canonical 6-nucleotide E-box sequence. CLOCK specifically binds to the half-site 5'-CAC-3', while BMAL1 binds to the half-site 5'-GTGA-3'. The CLOCK-BMAL1 heterodimer also recognizes the non-canonical E-box motifs 5'-AACGTGA-3' and 5'-CATGTGA-3'. Essential for the rhythmic interaction of CLOCK with ASS1 and plays a critical role in positively regulating CLOCK-mediated acetylation of ASS1. Plays a role in protecting against lethal sepsis by limiting the expression of immune checkpoint protein CD274 in macrophages in a PKM2-dependent manner. Regulates the diurnal rhythms of skeletal muscle metabolism via transcriptional activation of genes promoting triglyceride synthesis (DGAT2) and metabolic efficiency (COQ10B). This chain is Basic helix-loop-helix ARNT-like protein 1 (BMAL1), found in Equus caballus (Horse).